Here is a 367-residue protein sequence, read N- to C-terminus: MKKTLAALIVGAFAASAANAAVVYNNEGTNVELGGRLSIIAEQSNSTIKDQKQQHGALRNQSSRFHIKATHNFGDGFYAQGYLETRLVSAQSGTESDNFGHIITKYAYVTLGNKAFGEVKLGRAKTIADGITSAEDKEYGVLNNSKYIPTNGNTVGYTFKGIDGLVLGANYLLAQERYKYGGAAGGAGGAGAVAGEVYPQKISNGVQVGAKYDANNIIAGIAYGRTNYRESIHEKDLGKKQQVNGALSTLGYRFSDLGLLVSLDSGYAKTKNYKDKHEKSYFVSPGFQYELMEDTNFYGNFKYERNSVDQGKKEREQAVLFGIDHKLHKQVLTYIEGAYARTRTNDKSKAEKTEKEKSVGVGLRVYF.

The first 20 residues, 1–20, serve as a signal peptide directing secretion; the sequence is MKKTLAALIVGAFAASAANA.

Belongs to the Gram-negative porin family. Homotrimer.

Its subcellular location is the cell outer membrane. Its function is as follows. Forms pores that allow passive diffusion of small molecules across the outer membrane. The protein is Outer membrane protein P2 (ompP2) of Haemophilus influenzae.